Consider the following 333-residue polypeptide: Glycerol-3-phosphate dehydrogenase [NAD(P)+] (333 aa).

NADPH is bound by residues S10, W11, and K105. The sn-glycerol 3-phosphate site is built by K105, G136, and T138. Residue A140 participates in NADPH binding. Residues K191, D244, S254, R255, and N256 each contribute to the sn-glycerol 3-phosphate site. K191 functions as the Proton acceptor in the catalytic mechanism. Residue R255 coordinates NADPH. V279 and E281 together coordinate NADPH.

This sequence belongs to the NAD-dependent glycerol-3-phosphate dehydrogenase family.

The protein localises to the cytoplasm. The catalysed reaction is sn-glycerol 3-phosphate + NAD(+) = dihydroxyacetone phosphate + NADH + H(+). It carries out the reaction sn-glycerol 3-phosphate + NADP(+) = dihydroxyacetone phosphate + NADPH + H(+). It participates in membrane lipid metabolism; glycerophospholipid metabolism. In terms of biological role, catalyzes the reduction of the glycolytic intermediate dihydroxyacetone phosphate (DHAP) to sn-glycerol 3-phosphate (G3P), the key precursor for phospholipid synthesis. This chain is Glycerol-3-phosphate dehydrogenase [NAD(P)+], found in Trichlorobacter lovleyi (strain ATCC BAA-1151 / DSM 17278 / SZ) (Geobacter lovleyi).